The following is a 408-amino-acid chain: G patch domain-containing protein 4 (408 aa).

Position 1 is an N-acetylmethionine (Met-1). At Thr-4 the chain carries Phosphothreonine. The 47-residue stretch at 11-57 (GMKFAEEQLLKHGWTQGKGLGRKENGITQALRVTLKQDTYGVGHDPA) folds into the G-patch domain. Residue Lys-46 forms a Glycyl lysine isopeptide (Lys-Gly) (interchain with G-Cter in SUMO2) linkage. Thr-116 bears the Phosphothreonine mark. Disordered stretches follow at residues 116–141 (TSSG…KPPN) and 187–408 (GQDP…KKRD). Residues Ser-128 and Ser-130 each carry the phosphoserine modification. 3 stretches are compositionally biased toward basic and acidic residues: residues 222–236 (RSAE…ESIR), 245–257 (HQEE…REGT), and 274–283 (LKNREHVDRS). Residues 340-354 (EEDLNTEDEEVEEAL) show a composition bias toward acidic residues. The span at 358–372 (GTREAESRSCSDQKR) shows a compositional bias: basic and acidic residues. Over residues 398–408 (KAKKKKQKKRD) the composition is skewed to basic residues.

The sequence is that of G patch domain-containing protein 4 (GPATCH4) from Bos taurus (Bovine).